A 1256-amino-acid chain; its full sequence is GPI inositol-deacylase (1256 aa).

Over residues 37 to 48 (DVYANSTTNATA) the composition is skewed to polar residues. The interval 37–203 (DVYANSTTNA…MEKEEEQKFV (167 aa)) is disordered. N-linked (GlcNAc...) asparagine glycosylation is found at N41 and N45. Positions 59-68 (PRPSRPSQSS) are enriched in low complexity. Positions 69–83 (AAERTSPESPSVRQS) are enriched in polar residues. Residues 107–135 (QSPSQQSQNQQQQQQQQQQQQQQQQQQQS) show a composition bias toward low complexity. Over residues 143–156 (SGNFNWKLSHSRNG) the composition is skewed to polar residues. N155 carries N-linked (GlcNAc...) asparagine glycosylation. A compositionally biased stretch (low complexity) spans 165 to 180 (FFSSSFSHSPSTPPLS). The segment covering 190 to 202 (HSKEMEKEEEQKF) has biased composition (basic and acidic residues). Residues 214–234 (AITFVTLLISILGIGFLALVL) traverse the membrane as a helical segment. N235 carries N-linked (GlcNAc...) asparagine glycosylation. Residue S397 is part of the active site. N-linked (GlcNAc...) asparagine glycosylation occurs at N582. The next 2 helical transmembrane spans lie at 882-902 (LYMR…TLVL) and 929-949 (SIPL…NSSS). N-linked (GlcNAc...) asparagine glycosylation is present at N960. A run of 6 helical transmembrane segments spans residues 980-1000 (PFFW…CTVF), 1005-1025 (LTLV…PGWI), 1053-1073 (ILLV…VCCL), 1103-1123 (SILL…VVWI), 1130-1150 (WLTP…IILV), and 1172-1192 (VLLF…AYML). N1212, N1239, and N1242 each carry an N-linked (GlcNAc...) asparagine glycan.

It belongs to the GPI inositol-deacylase family.

It localises to the endoplasmic reticulum membrane. In terms of biological role, involved in inositol deacylation of GPI-anchored proteins which plays important roles in the quality control and ER-associated degradation of GPI-anchored proteins. This Neurospora crassa (strain ATCC 24698 / 74-OR23-1A / CBS 708.71 / DSM 1257 / FGSC 987) protein is GPI inositol-deacylase (bst-1).